The sequence spans 132 residues: ATP synthase epsilon chain, chloroplastic (132 aa).

It belongs to the ATPase epsilon chain family. In terms of assembly, F-type ATPases have 2 components, CF(1) - the catalytic core - and CF(0) - the membrane proton channel. CF(1) has five subunits: alpha(3), beta(3), gamma(1), delta(1), epsilon(1). CF(0) has three main subunits: a, b and c.

The protein resides in the plastid. The protein localises to the chloroplast thylakoid membrane. Its function is as follows. Produces ATP from ADP in the presence of a proton gradient across the membrane. In Coffea arabica (Arabian coffee), this protein is ATP synthase epsilon chain, chloroplastic.